We begin with the raw amino-acid sequence, 264 residues long: 3-methyl-2-oxobutanoate hydroxymethyltransferase (264 aa).

Mg(2+)-binding residues include D45 and D84. Residues 45 to 46 (DS), D84, and K112 each bind 3-methyl-2-oxobutanoate. Position 114 (E114) interacts with Mg(2+). Residue E181 is the Proton acceptor of the active site.

This sequence belongs to the PanB family. Homodecamer; pentamer of dimers. Requires Mg(2+) as cofactor.

It is found in the cytoplasm. The enzyme catalyses 3-methyl-2-oxobutanoate + (6R)-5,10-methylene-5,6,7,8-tetrahydrofolate + H2O = 2-dehydropantoate + (6S)-5,6,7,8-tetrahydrofolate. Its pathway is cofactor biosynthesis; (R)-pantothenate biosynthesis; (R)-pantoate from 3-methyl-2-oxobutanoate: step 1/2. In terms of biological role, catalyzes the reversible reaction in which hydroxymethyl group from 5,10-methylenetetrahydrofolate is transferred onto alpha-ketoisovalerate to form ketopantoate. This Tolumonas auensis (strain DSM 9187 / NBRC 110442 / TA 4) protein is 3-methyl-2-oxobutanoate hydroxymethyltransferase.